The chain runs to 206 residues: Superoxide dismutase [Mn] (206 aa).

Mn(2+) is bound by residues His30, His78, Asp166, and His170.

Belongs to the iron/manganese superoxide dismutase family. As to quaternary structure, homodimer. Mn(2+) is required as a cofactor.

It catalyses the reaction 2 superoxide + 2 H(+) = H2O2 + O2. In terms of biological role, destroys superoxide anion radicals which are normally produced within the cells and which are toxic to biological systems. The protein is Superoxide dismutase [Mn] (sodA) of Chlamydia trachomatis serovar D (strain ATCC VR-885 / DSM 19411 / UW-3/Cx).